The sequence spans 487 residues: Aspartyl/glutamyl-tRNA(Asn/Gln) amidotransferase subunit B (487 aa).

This sequence belongs to the GatB/GatE family. GatB subfamily. Heterotrimer of A, B and C subunits.

It catalyses the reaction L-glutamyl-tRNA(Gln) + L-glutamine + ATP + H2O = L-glutaminyl-tRNA(Gln) + L-glutamate + ADP + phosphate + H(+). The enzyme catalyses L-aspartyl-tRNA(Asn) + L-glutamine + ATP + H2O = L-asparaginyl-tRNA(Asn) + L-glutamate + ADP + phosphate + 2 H(+). Allows the formation of correctly charged Asn-tRNA(Asn) or Gln-tRNA(Gln) through the transamidation of misacylated Asp-tRNA(Asn) or Glu-tRNA(Gln) in organisms which lack either or both of asparaginyl-tRNA or glutaminyl-tRNA synthetases. The reaction takes place in the presence of glutamine and ATP through an activated phospho-Asp-tRNA(Asn) or phospho-Glu-tRNA(Gln). The protein is Aspartyl/glutamyl-tRNA(Asn/Gln) amidotransferase subunit B of Chlamydia abortus (strain DSM 27085 / S26/3) (Chlamydophila abortus).